Here is a 178-residue protein sequence, read N- to C-terminus: CDP-archaeol synthase (178 aa).

The next 4 helical transmembrane spans lie at 3-23 (LLLLLFSAIWYILPAYIANAV), 56-76 (FFGILFGIITGILQHFIVILY), 91-111 (IILSFLLATGALFGDMLGSFI), and 136-156 (LLFAYPFYPLPINTIILLLVI).

This sequence belongs to the CDP-archaeol synthase family. Mg(2+) serves as cofactor.

Its subcellular location is the cell membrane. It catalyses the reaction 2,3-bis-O-(geranylgeranyl)-sn-glycerol 1-phosphate + CTP + H(+) = CDP-2,3-bis-O-(geranylgeranyl)-sn-glycerol + diphosphate. Its pathway is membrane lipid metabolism; glycerophospholipid metabolism. Functionally, catalyzes the formation of CDP-2,3-bis-(O-geranylgeranyl)-sn-glycerol (CDP-archaeol) from 2,3-bis-(O-geranylgeranyl)-sn-glycerol 1-phosphate (DGGGP) and CTP. This reaction is the third ether-bond-formation step in the biosynthesis of archaeal membrane lipids. The protein is CDP-archaeol synthase of Methanococcus maripaludis (strain C5 / ATCC BAA-1333).